The following is a 295-amino-acid chain: GTPase Era (295 aa).

Positions 5–172 (YCGYAAIIGR…EQAVHQLMPE (168 aa)) constitute an Era-type G domain. The segment at 13 to 20 (GRPNVGKS) is G1. 13 to 20 (GRPNVGKS) contributes to the GTP binding site. Residues 39 to 43 (QTTRY) are G2. Positions 60 to 63 (DTPG) are G3. GTP-binding positions include 60-64 (DTPGL) and 121-124 (NKVD). The tract at residues 121-124 (NKVD) is G4. A G5 region spans residues 151–153 (LSA). The region spanning 203 to 279 (LGQEIPYSLA…FLQLWVKVKS (77 aa)) is the KH type-2 domain.

This sequence belongs to the TRAFAC class TrmE-Era-EngA-EngB-Septin-like GTPase superfamily. Era GTPase family. Monomer.

It localises to the cytoplasm. It is found in the cell inner membrane. In terms of biological role, an essential GTPase that binds both GDP and GTP, with rapid nucleotide exchange. Plays a role in 16S rRNA processing and 30S ribosomal subunit biogenesis and possibly also in cell cycle regulation and energy metabolism. The chain is GTPase Era from Coxiella burnetii (strain CbuK_Q154) (Coxiella burnetii (strain Q154)).